The sequence spans 309 residues: Ribonuclease Z (309 aa).

Zn(2+) is bound by residues His-61, His-63, Asp-65, His-66, His-144, Asp-212, and His-271. The Proton acceptor role is filled by Asp-65.

Belongs to the RNase Z family. In terms of assembly, homodimer. Zn(2+) serves as cofactor.

It carries out the reaction Endonucleolytic cleavage of RNA, removing extra 3' nucleotides from tRNA precursor, generating 3' termini of tRNAs. A 3'-hydroxy group is left at the tRNA terminus and a 5'-phosphoryl group is left at the trailer molecule.. Functionally, zinc phosphodiesterase, which displays some tRNA 3'-processing endonuclease activity. Probably involved in tRNA maturation, by removing a 3'-trailer from precursor tRNA. In Clostridium acetobutylicum (strain ATCC 824 / DSM 792 / JCM 1419 / IAM 19013 / LMG 5710 / NBRC 13948 / NRRL B-527 / VKM B-1787 / 2291 / W), this protein is Ribonuclease Z.